The chain runs to 437 residues: ATP-dependent protease ATPase subunit HslU (437 aa).

ATP-binding positions include Ile18, 60–65, Asp250, Glu315, and Arg387; that span reads GVGKTE.

Belongs to the ClpX chaperone family. HslU subfamily. As to quaternary structure, a double ring-shaped homohexamer of HslV is capped on each side by a ring-shaped HslU homohexamer. The assembly of the HslU/HslV complex is dependent on binding of ATP.

The protein localises to the cytoplasm. Functionally, ATPase subunit of a proteasome-like degradation complex; this subunit has chaperone activity. The binding of ATP and its subsequent hydrolysis by HslU are essential for unfolding of protein substrates subsequently hydrolyzed by HslV. HslU recognizes the N-terminal part of its protein substrates and unfolds these before they are guided to HslV for hydrolysis. The protein is ATP-dependent protease ATPase subunit HslU of Dinoroseobacter shibae (strain DSM 16493 / NCIMB 14021 / DFL 12).